We begin with the raw amino-acid sequence, 427 residues long: D-inositol 3-phosphate glycosyltransferase (427 aa).

Residue His-12 participates in 1D-myo-inositol 3-phosphate binding. UDP-N-acetyl-alpha-D-glucosamine is bound by residues 18–19 (QP) and Gly-26. Residues 23–28 (DAGGMN), Lys-81, Tyr-113, Thr-137, and Arg-157 contribute to the 1D-myo-inositol 3-phosphate site. UDP-N-acetyl-alpha-D-glucosamine contacts are provided by Arg-234, Lys-239, and Arg-297. Mg(2+) contacts are provided by Tyr-306, Gln-307, and Ala-309. Residues Glu-319 and Glu-327 each contribute to the UDP-N-acetyl-alpha-D-glucosamine site. Thr-333 serves as a coordination point for Mg(2+).

This sequence belongs to the glycosyltransferase group 1 family. MshA subfamily. As to quaternary structure, homodimer.

The enzyme catalyses 1D-myo-inositol 3-phosphate + UDP-N-acetyl-alpha-D-glucosamine = 1D-myo-inositol 2-acetamido-2-deoxy-alpha-D-glucopyranoside 3-phosphate + UDP + H(+). Its function is as follows. Catalyzes the transfer of a N-acetyl-glucosamine moiety to 1D-myo-inositol 3-phosphate to produce 1D-myo-inositol 2-acetamido-2-deoxy-glucopyranoside 3-phosphate in the mycothiol biosynthesis pathway. This chain is D-inositol 3-phosphate glycosyltransferase, found in Corynebacterium diphtheriae (strain ATCC 700971 / NCTC 13129 / Biotype gravis).